The primary structure comprises 182 residues: Ribulose bisphosphate carboxylase small subunit, chloroplastic 4 (182 aa).

The N-terminal 41 residues, 1–41, are a transit peptide targeting the chloroplast; sequence MAATMMNKTVVLSKGCTKPSAVPKVSINRKGFLNTAMNKKR.

It belongs to the RuBisCO small chain family. In terms of assembly, heterohexadecamer of 8 large and 8 small subunits.

The protein resides in the plastid. Its subcellular location is the chloroplast. In terms of biological role, ruBisCO catalyzes two reactions: the carboxylation of D-ribulose 1,5-bisphosphate, the primary event in carbon dioxide fixation, as well as the oxidative fragmentation of the pentose substrate. Both reactions occur simultaneously and in competition at the same active site. Although the small subunit is not catalytic it is essential for maximal activity. This Acetabularia peniculus (Green alga) protein is Ribulose bisphosphate carboxylase small subunit, chloroplastic 4.